The sequence spans 485 residues: Putative E3 ubiquitin-protein ligase makorin-4 (485 aa).

Positions 1–32 are enriched in low complexity; the sequence is MAEAAAPGTTVTTSGAGAAAAEAAETAEAVSP. Positions 1–63 are disordered; it reads MAEAAAPGTT…GSDGSGGRGD (63 aa). Positions 45–63 are enriched in gly residues; sequence AGGGVGGSDGSDGSGGRGD. C3H1-type zinc fingers lie at residues 90–117, 124–146, and 243–270; these read WTKQ…HDLS, VCKY…HSKP, and ETKK…HGDL. Positions 271–298 are makorin-type Cys-His; it reads CDMCGLQVLHPMDAAQRSQHIQACIEAH. The RING-type zinc-finger motif lies at 316–370; sequence CGICMEVVYEKANPNEHRFGILSNCNHTFCLKCIRKWRSAKEFESRIVKSCPQCR. Residues 399–428 form a C3H1-type 4 zinc finger; it reads AMSNKACKYFDEGRGSCPFGENCFYKHMYP.

It catalyses the reaction S-ubiquitinyl-[E2 ubiquitin-conjugating enzyme]-L-cysteine + [acceptor protein]-L-lysine = [E2 ubiquitin-conjugating enzyme]-L-cysteine + N(6)-ubiquitinyl-[acceptor protein]-L-lysine.. It functions in the pathway protein modification; protein ubiquitination. In terms of biological role, may act as a E3 ubiquitin ligase catalyzing the covalent attachment of ubiquitin moieties onto substrate proteins. The polypeptide is Putative E3 ubiquitin-protein ligase makorin-4 (MKRN4P) (Homo sapiens (Human)).